Consider the following 951-residue polypeptide: Spliceosome associated factor 3, U4/U6 recycling protein (951 aa).

Residues 1–58 (MAATGNEEQTLLPDIEEEAEGMEREMESEDDEEEGMGVEHSEEEDEEDTSEDERENEA) are disordered. A compositionally biased stretch (acidic residues) spans 14-56 (DIEEEAEGMEREMESEDDEEEGMGVEHSEEEDEEDTSEDEREN). HAT repeat units follow at residues 88 to 120 (GKLH…DEIR), 126 to 157 (SDRE…YSIG), 163 to 199 (GGIE…FEIV), 222 to 255 (AQLE…WADD), 304 to 336 (GDPA…YLDR), 339 to 371 (KIKD…ALER), 374 to 410 (ADHQ…YLRR), and 467 to 500 (KNMQ…LERS). Residues 517–941 (CTSDYPEHVC…LDTQTKSLSN (425 aa)) form a necessary and sufficient for U6 snRNA binding region. The stretch at 533–593 (ERVEGSLEDW…VKADKKAQKK (61 aa)) forms a coiled coil. Basic and acidic residues predominate over residues 567-581 (EALHARQEEEKAEQR). A disordered region spans residues 567-686 (EALHARQEEE…HDMPKEQRKD (120 aa)). The span at 582–596 (RKVKADKKAQKKGQK) shows a compositional bias: basic residues. Residues 608–619 (DDDEEEWGEEAE) are compositionally biased toward acidic residues. Basic and acidic residues predominate over residues 674–686 (RQPHDMPKEQRKD). 2 consecutive RRM domains span residues 688–766 (NCVF…PCVD) and 785–862 (HKIF…ISNP). The interval 905–938 (RQSTPDAKAENGTISAPHATVTDGETSLDTQTKS) is disordered. A compositionally biased stretch (polar residues) spans 927–938 (DGETSLDTQTKS).

Its subcellular location is the nucleus. It localises to the nucleoplasm. It is found in the cajal body. The protein resides in the nucleus speckle. The protein localises to the cytoplasm. In terms of biological role, U6 snRNP-binding protein that functions as a recycling factor of the splicing machinery. Promotes the initial reassembly of U4 and U6 snRNPs following their ejection from the spliceosome during its maturation. May also function as a substrate targeting factor for deubiquitinases and mediate the deubiquitination of components of the spliceosome and histones. The protein is Spliceosome associated factor 3, U4/U6 recycling protein of Danio rerio (Zebrafish).